A 473-amino-acid chain; its full sequence is Ornithine aminotransferase, mitochondrial (473 aa).

A mitochondrion-targeting transit peptide spans 1–32; the sequence is MAAALARRGGGGLARALARGRGMCSATAAERA. Lys293 carries the N6-(pyridoxal phosphate)lysine modification.

This sequence belongs to the class-III pyridoxal-phosphate-dependent aminotransferase family. In terms of assembly, homotetramer. Requires pyridoxal 5'-phosphate as cofactor.

The protein localises to the mitochondrion matrix. The catalysed reaction is a 2-oxocarboxylate + L-ornithine = L-glutamate 5-semialdehyde + an L-alpha-amino acid. It functions in the pathway amino-acid biosynthesis; L-proline biosynthesis; L-glutamate 5-semialdehyde from L-ornithine: step 1/1. Functionally, confers drought and oxidative stress tolerance mainly through enhancing ROS-scavenging capacity and Pro pre-accumulation. The sequence is that of Ornithine aminotransferase, mitochondrial (OAT) from Oryza sativa subsp. japonica (Rice).